The sequence spans 263 residues: 4-hydroxy-tetrahydrodipicolinate reductase (263 aa).

Residues 7–12 and aspartate 33 each bind NAD(+); that span reads GASGRM. NADP(+) is bound at residue arginine 34. NAD(+) is bound by residues 96 to 98 and 120 to 123; these read GTT and APNM. Histidine 153 functions as the Proton donor/acceptor in the catalytic mechanism. (S)-2,3,4,5-tetrahydrodipicolinate is bound at residue histidine 154. Residue lysine 157 is the Proton donor of the active site. Residue 163–164 participates in (S)-2,3,4,5-tetrahydrodipicolinate binding; it reads GT.

Belongs to the DapB family.

The protein localises to the cytoplasm. It carries out the reaction (S)-2,3,4,5-tetrahydrodipicolinate + NAD(+) + H2O = (2S,4S)-4-hydroxy-2,3,4,5-tetrahydrodipicolinate + NADH + H(+). The catalysed reaction is (S)-2,3,4,5-tetrahydrodipicolinate + NADP(+) + H2O = (2S,4S)-4-hydroxy-2,3,4,5-tetrahydrodipicolinate + NADPH + H(+). It participates in amino-acid biosynthesis; L-lysine biosynthesis via DAP pathway; (S)-tetrahydrodipicolinate from L-aspartate: step 4/4. In terms of biological role, catalyzes the conversion of 4-hydroxy-tetrahydrodipicolinate (HTPA) to tetrahydrodipicolinate. In Ralstonia nicotianae (strain ATCC BAA-1114 / GMI1000) (Ralstonia solanacearum), this protein is 4-hydroxy-tetrahydrodipicolinate reductase.